Here is a 304-residue protein sequence, read N- to C-terminus: Acetylglutamate kinase (304 aa).

Residues 77-78 (GG), arginine 99, and asparagine 193 each bind substrate.

This sequence belongs to the acetylglutamate kinase family. ArgB subfamily.

The protein localises to the cytoplasm. The catalysed reaction is N-acetyl-L-glutamate + ATP = N-acetyl-L-glutamyl 5-phosphate + ADP. The protein operates within amino-acid biosynthesis; L-arginine biosynthesis; N(2)-acetyl-L-ornithine from L-glutamate: step 2/4. Its function is as follows. Catalyzes the ATP-dependent phosphorylation of N-acetyl-L-glutamate. The chain is Acetylglutamate kinase from Chlorobium limicola (strain DSM 245 / NBRC 103803 / 6330).